The following is a 479-amino-acid chain: Cardiolipin synthase A (479 aa).

2 consecutive transmembrane segments (helical) span residues 8–28 and 38–58; these read LLAY…IHAV and IAWA…YLIF. PLD phosphodiesterase domains follow at residues 218–245 and 392–419; these read VNFR…GDEY and TPGF…DNRS. Catalysis depends on residues His223, Lys225, Asp230, His397, Lys399, and Asp404.

The protein belongs to the phospholipase D family. Cardiolipin synthase subfamily. ClsA sub-subfamily.

Its subcellular location is the cell inner membrane. The catalysed reaction is 2 a 1,2-diacyl-sn-glycero-3-phospho-(1'-sn-glycerol) = a cardiolipin + glycerol. Its function is as follows. Catalyzes the reversible phosphatidyl group transfer from one phosphatidylglycerol molecule to another to form cardiolipin (CL) (diphosphatidylglycerol) and glycerol. This is Cardiolipin synthase A from Pseudomonas fluorescens (strain SBW25).